Here is a 478-residue protein sequence, read N- to C-terminus: Cytochrome P450 monooxygenase ATR3 (478 aa).

A helical membrane pass occupies residues Ala20–Leu42. Asn159 and Asn268 each carry an N-linked (GlcNAc...) asparagine glycan.

This sequence belongs to the cytochrome P450 family. Requires heme as cofactor.

The protein resides in the membrane. The protein operates within mycotoxin biosynthesis. Cytochrome P450 monooxygenase; part of the core atranone cluster (CAC) which products are predicted to catalyze most or all steps of mycotoxin atranone synthesis, starting from geranylgeranyl pyrophosphate (GGPP). The initial cyclization of GGPP to dolabellane is probably performed by the terpene cyclase ATR13. The Baeyer-Villiger oxidation near the end of the atranone synthesis, which converts atranones D and E to atranones F and G is predicted to be catalyzed by the monooxygenase ATR8. Of the CAC's other predicted gene products, the reducing PKS ATR6 might synthesize a polyketide chain. This polyketide is probably transferred onto the atranone backbone by the polyketide transferase ATR5. Other predicted CAC products include 4 oxygenases (ATR2, ATR3, ATR4, and ATR14), 3 short-chain reductases (ATR7, ATR9, and ATR10), and a methyltransferase (ATR12). These may all be involved in the various steps of atranone biosynthesis, although their specific roles must await experimental determination. The sequence is that of Cytochrome P450 monooxygenase ATR3 from Stachybotrys chlorohalonatus (strain IBT 40285).